A 286-amino-acid chain; its full sequence is F-box/SPRY domain-containing protein 1 (286 aa).

N-acetylalanine is present on Ala-2. Residues 33 to 82 (SGVGGRLPSRVLELVFSYLELSELRSCALVCKHWYRCLHGDENSEVWRSL) enclose the F-box domain. One can recognise a B30.2/SPRY domain in the interval 92–284 (LRTDILCNLP…VTLVYLGKPL (193 aa)).

This sequence belongs to the FBXO45/Fsn family. In terms of assembly, forms a complex with MYCBP2 and SKP1. Interacts with HEY1; leading to FBXO45 nuclear translocation. Interacts (via SPRY domain) with CDH2. In terms of tissue distribution, expressed speciffically in the central nervous system, including cerebellum, medulla oblongata, olfactory bulb, hippocampus, cortex and brain stem.

The protein localises to the secreted. Its subcellular location is the postsynaptic cell membrane. It is found in the presynaptic cell membrane. It localises to the nucleus. It functions in the pathway protein modification; protein ubiquitination. In terms of biological role, component of E3 ubiquitin ligase complex consisting of FBXO45, MYCBP2 and SKP1. Functions in substrate recognition but plays also an important role in assembly of the complex. Required for normal neuromuscular synaptogenesis, axon pathfinding and neuronal migration. Regulates neuron migration during brain development through interaction with N-cadherin/CDH2 after secretion via a non-classical mechanism. Plays a role in the regulation of neurotransmission at mature neurons. May control synaptic activity by controlling UNC13A via ubiquitin dependent pathway. Specifically recognizes TP73, promoting its ubiquitination and degradation. Polyubiquitinates NMNAT2, an adenylyltransferase that acts as an axon maintenance factor, and regulates its stability and degradation by the proteasome. Acts also by ubiquitinating FBXW7 during prolonged mitotic arrest and promotes FBXW7 proteasomal degradation. Induces subsequently an increase in mitotic slippage and prevents mitotic cell death. In response to influenza infection, mediates interferon-lambda receptor IFNLR1 polyubiquitination and degradation through the ubiquitin-proteasome system by docking with its intracellular receptor domain. The sequence is that of F-box/SPRY domain-containing protein 1 from Mus musculus (Mouse).